A 114-amino-acid chain; its full sequence is Small ribosomal subunit protein uS17 (114 aa).

Belongs to the universal ribosomal protein uS17 family. In terms of assembly, part of the 30S ribosomal subunit.

One of the primary rRNA binding proteins, it binds specifically to the 5'-end of 16S ribosomal RNA. This is Small ribosomal subunit protein uS17 from Sulfolobus acidocaldarius (strain ATCC 33909 / DSM 639 / JCM 8929 / NBRC 15157 / NCIMB 11770).